The chain runs to 128 residues: Azurin (128 aa).

Residues 1–128 form the Plastocyanin-like domain; that stretch reads AECKVTVDST…AMMKGTVTLK (128 aa). Residues Cys3 and Cys26 are joined by a disulfide bond. Residues His46, Cys112, His117, and Met121 each coordinate Cu cation.

It is found in the periplasm. In terms of biological role, transfers electrons from cytochrome c551 to cytochrome oxidase. This chain is Azurin, found in Pseudomonas fluorescens biotype C.